The primary structure comprises 242 residues: Lectin-like protein At1g53060 (242 aa).

Positions 3-237 (FHGDAEYASE…RHEILDWSFE (235 aa)) are legume-lectin like. The residue at position 207 (serine 207) is a Phosphoserine.

This sequence belongs to the leguminous lectin family.

The sequence is that of Lectin-like protein At1g53060 from Arabidopsis thaliana (Mouse-ear cress).